We begin with the raw amino-acid sequence, 159 residues long: uncharacterized protein (159 aa).

2 disordered regions span residues 1-23 and 91-110; these read MEQD…KGQA and AGGG…GPAA.

This is an uncharacterized protein from Homo sapiens (Human).